The following is a 43-amino-acid chain: MAARAVFLALSAQLLQARLMKEESPVVSWRLEPEDGTALCFIF.

The N-terminal stretch at 1–17 is a signal peptide; that stretch reads MAARAVFLALSAQLLQA.

The protein belongs to the BAGE family. Not expressed in normal tissues, except in testis. Expressed with significant proportion in melanomas, but also in tumors of various histological origins, such as bladder carcinomas, head and neck squamous cell carcinomas, lung and breast carcinomas. Not expressed in renal, colorectal and prostatic carcinomas, leukemias and lymphomas. More frequently expressed in metastatic melanomas than in primary melanomas.

It localises to the secreted. In terms of biological role, unknown. Antigen recognized on a melanoma by autologous cytolytic T-lymphocytes. In Homo sapiens (Human), this protein is B melanoma antigen 1 (BAGE).